A 1141-amino-acid polypeptide reads, in one-letter code: PR domain zinc finger protein 15 (1141 aa).

The SET domain occupies 49 to 159; it reads PNLEIRRLED…PGTELRVWYA (111 aa). A C2H2-type 1 zinc finger spans residues 197–219; the sequence is WACKVCSATFLELQLLNEHLLGH. The disordered stretch occupies residues 224–283; sequence KSLPPGSQSEAAAPEKEQDTPRGEPPAVPESENVATKEQKKKPRRGRKPKVSKAEQPLVI. The segment covering 236–245 has biased composition (basic and acidic residues); that stretch reads APEKEQDTPR. The span at 262–274 shows a compositional bias: basic residues; it reads QKKKPRRGRKPKV. 4 C2H2-type zinc fingers span residues 372 to 394, 399 to 422, 460 to 482, and 487 to 509; these read YQCNICSKIFQNSSNLSRHVRSH, FKCEECAKLFSRKESLKQHVSYKH, FQCEMCFRFFSTNSNLSKHKKKH, and FACEVCSKMFYRKDVMLDHQRRH. K517 is covalently cross-linked (Glycyl lysine isopeptide (Lys-Gly) (interchain with G-Cter in SUMO2)). 2 consecutive C2H2-type zinc fingers follow at residues 536-558 and 563-585; these read SGCPVCGKVFSCRSNMNKHLLTH and YTCEICGRKFFRVDVLRDHIHVH. The tract at residues 604-623 is disordered; the sequence is IGISSEENDDNSDESADSEP. Residues 609-620 are compositionally biased toward acidic residues; sequence EENDDNSDESAD. C2H2-type zinc fingers lie at residues 626 to 649, 654 to 676, 690 to 712, 718 to 740, 746 to 768, 774 to 796, 802 to 824, 830 to 853, and 859 to 882; these read YSCKRCQLTFGRGKEYLKHIMEVH, YGCSICNRRFALKATYHAHMVIH, HPCEICGRIFNSIGNLERHKLIH, HACEQCGKSFARKDMLKEHMRVH, YLCAECGKGMKTKHALRHHMKLH, YECKECHRRFAQKVNMLKHCKRH, FMCELCGKTFSERNTMETHKLIH, WTCSVCDKKYVTEYMLQKHVQLTH, and QSCQLCGTKVSTRASMSRHMRRKH. 2 disordered regions span residues 922 to 973 and 1108 to 1141; these read AEGK…DETN and QTDVLPPSQPQAPPQQAAQPQVQAEQQQQQMYSY. The span at 927 to 938 shows a compositional bias: basic residues; sequence GKAAKRSHKRKQ. The segment covering 1121-1141 has biased composition (low complexity); the sequence is PQQAAQPQVQAEQQQQQMYSY.

Belongs to the class V-like SAM-binding methyltransferase superfamily. Detected in all tissues examined.

The protein resides in the nucleus. Functionally, sequence-specific DNA-binding transcriptional regulator. Plays a role as a molecular node in a transcriptional network regulating embryonic development and cell fate decision. Stimulates the expression of upstream key transcriptional activators and repressors of the Wnt/beta-catenin and MAPK/ERK pathways, respectively, that are essential for naive pluripotency and self-renewal maintenance of embryonic stem cells (ESCs). Specifically promotes SPRY1 and RSPO1 transcription activation through recognition and direct binding of a specific DNA sequence in their promoter regions. Involved in early embryo development. Also plays a role in induced pluripotent stem cells (iPSCs) reprogramming. The protein is PR domain zinc finger protein 15 of Homo sapiens (Human).